Here is a 95-residue protein sequence, read N- to C-terminus: Putative membrane protein insertion efficiency factor (95 aa).

The interval 72-95 is disordered; it reads FDPVPDAPTSPSPSSSCSCKGPHP. Over residues 83 to 95 the composition is skewed to low complexity; the sequence is SPSSSCSCKGPHP.

The protein belongs to the UPF0161 family.

It is found in the cell inner membrane. In terms of biological role, could be involved in insertion of integral membrane proteins into the membrane. This chain is Putative membrane protein insertion efficiency factor, found in Xanthomonas axonopodis pv. citri (strain 306).